Consider the following 111-residue polypeptide: Ribonuclease P protein component (111 aa).

Belongs to the RnpA family. In terms of assembly, consists of a catalytic RNA component (M1 or rnpB) and a protein subunit.

It catalyses the reaction Endonucleolytic cleavage of RNA, removing 5'-extranucleotides from tRNA precursor.. Functionally, RNaseP catalyzes the removal of the 5'-leader sequence from pre-tRNA to produce the mature 5'-terminus. It can also cleave other RNA substrates such as 4.5S RNA. The protein component plays an auxiliary but essential role in vivo by binding to the 5'-leader sequence and broadening the substrate specificity of the ribozyme. The chain is Ribonuclease P protein component from Clostridium botulinum (strain 657 / Type Ba4).